We begin with the raw amino-acid sequence, 246 residues long: 4-aminobenzoate synthase (246 aa).

Fe(2+)-binding residues include E88, H95, E149, H181, D185, and H188.

It belongs to the CADD family. As to quaternary structure, homodimer. Requires Fe(2+) as cofactor. Mn(2+) is required as a cofactor.

In terms of biological role, involved in de novo para-aminobenzoate (PABA) biosynthesis. Acts as a self-sacrificing or 'suicide' enzyme that utilizes its own active site tyrosine residue(s) as the substrate for PABA synthesis. The side chain of the tyrosine residue is released from the protein backbone via cleavage of the C(alpha)-C(beta) bond, leaving a glycine in place of the original tyrosine residue. Reaction requires O(2) and a reduced dimetal cofactor. The chain is 4-aminobenzoate synthase from Nitrosomonas europaea (strain ATCC 19718 / CIP 103999 / KCTC 2705 / NBRC 14298).